We begin with the raw amino-acid sequence, 313 residues long: GTPase Era (313 aa).

Residues 13-186 (RSGFVSFVGR…ADLLVGLLPE (174 aa)) form the Era-type G domain. A G1 region spans residues 21-28 (GRPNAGKS). 21–28 (GRPNAGKS) lines the GTP pocket. The G2 stretch occupies residues 47–51 (QTTRT). The tract at residues 68–71 (DTPG) is G3. Residues 68–72 (DTPGL) and 131–134 (TKTD) each bind GTP. Residues 131 to 134 (TKTD) are G4. A G5 region spans residues 165-167 (VSA). The KH type-2 domain occupies 217–299 (LRDELPHSVA…YLDLHVKIAK (83 aa)).

The protein belongs to the TRAFAC class TrmE-Era-EngA-EngB-Septin-like GTPase superfamily. Era GTPase family. Monomer.

The protein localises to the cytoplasm. It localises to the cell membrane. Its function is as follows. An essential GTPase that binds both GDP and GTP, with rapid nucleotide exchange. Plays a role in 16S rRNA processing and 30S ribosomal subunit biogenesis and possibly also in cell cycle regulation and energy metabolism. This Nocardioides sp. (strain ATCC BAA-499 / JS614) protein is GTPase Era.